The primary structure comprises 192 residues: Cytidylate kinase (192 aa).

7-15 provides a ligand contact to ATP; that stretch reads GPAGSGKST.

It belongs to the cytidylate kinase family. Type 2 subfamily.

It is found in the cytoplasm. The enzyme catalyses CMP + ATP = CDP + ADP. It catalyses the reaction dCMP + ATP = dCDP + ADP. This is Cytidylate kinase from Natronomonas pharaonis (strain ATCC 35678 / DSM 2160 / CIP 103997 / JCM 8858 / NBRC 14720 / NCIMB 2260 / Gabara) (Halobacterium pharaonis).